A 215-amino-acid chain; its full sequence is Programmed cell death protein 10 homolog (215 aa).

Belongs to the PDCD10 family. In terms of assembly, interacts with gck-1. Expressed in pharynx, intestine, germline, vulva and excretory canals.

The protein localises to the cytoplasm. Its subcellular location is the apical cell membrane. Involved in excretory canal elongation during postembryonic development. Plays a role in promoting Golgi stability, ER integrity and vesicle transport probably by regulating the activation of Rho GTPase cdc-42. Involved in fertility. This is Programmed cell death protein 10 homolog from Caenorhabditis elegans.